A 335-amino-acid polypeptide reads, in one-letter code: NADH-quinone oxidoreductase subunit H (335 aa).

The next 8 membrane-spanning stretches (helical) occupy residues 11 to 31 (VILTVVRAIVVLLAVVVCGAL), 81 to 101 (MIFTLAPVVAMSALLIAFVVI), 114 to 134 (IGLLFFFAMAGLSVYAVLFAG), 154 to 174 (VSYEVFLGLALMGVVVQVGSF), 187 to 207 (LWFIIPQFFGFCTFFIAGVAV), 238 to 258 (FFVGEYIGIILISALLVTLFF), 270 to 290 (QVPFLWFALKTAFFIMLFILL), and 307 to 327 (WKFCLPLTLINLLVTAAVVLY).

This sequence belongs to the complex I subunit 1 family. In terms of assembly, NDH-1 is composed of 13 different subunits. Subunits NuoA, H, J, K, L, M, N constitute the membrane sector of the complex.

The protein resides in the cell inner membrane. It carries out the reaction a quinone + NADH + 5 H(+)(in) = a quinol + NAD(+) + 4 H(+)(out). NDH-1 shuttles electrons from NADH, via FMN and iron-sulfur (Fe-S) centers, to quinones in the respiratory chain. The immediate electron acceptor for the enzyme in this species is believed to be ubiquinone. Couples the redox reaction to proton translocation (for every two electrons transferred, four hydrogen ions are translocated across the cytoplasmic membrane), and thus conserves the redox energy in a proton gradient. This subunit may bind ubiquinone. The chain is NADH-quinone oxidoreductase subunit H from Pseudomonas entomophila (strain L48).